The chain runs to 129 residues: Small ribosomal subunit protein uS11 (129 aa).

It belongs to the universal ribosomal protein uS11 family. Part of the 30S ribosomal subunit. Interacts with proteins S7 and S18. Binds to IF-3.

Functionally, located on the platform of the 30S subunit, it bridges several disparate RNA helices of the 16S rRNA. Forms part of the Shine-Dalgarno cleft in the 70S ribosome. The sequence is that of Small ribosomal subunit protein uS11 from Erwinia tasmaniensis (strain DSM 17950 / CFBP 7177 / CIP 109463 / NCPPB 4357 / Et1/99).